Reading from the N-terminus, the 305-residue chain is Acetylglutamate kinase (305 aa).

Substrate contacts are provided by residues 67 to 68, Arg89, and Asn190; that span reads GG.

It belongs to the acetylglutamate kinase family. ArgB subfamily.

It localises to the cytoplasm. The enzyme catalyses N-acetyl-L-glutamate + ATP = N-acetyl-L-glutamyl 5-phosphate + ADP. It functions in the pathway amino-acid biosynthesis; L-arginine biosynthesis; N(2)-acetyl-L-ornithine from L-glutamate: step 2/4. Its function is as follows. Catalyzes the ATP-dependent phosphorylation of N-acetyl-L-glutamate. This Bifidobacterium longum subsp. infantis (strain ATCC 15697 / DSM 20088 / JCM 1222 / NCTC 11817 / S12) protein is Acetylglutamate kinase.